The chain runs to 304 residues: Coenzyme PQQ synthesis protein B (304 aa).

Belongs to the PqqB family.

Its pathway is cofactor biosynthesis; pyrroloquinoline quinone biosynthesis. In terms of biological role, may be involved in the transport of PQQ or its precursor to the periplasm. This chain is Coenzyme PQQ synthesis protein B, found in Ectopseudomonas mendocina (strain ymp) (Pseudomonas mendocina).